A 334-amino-acid chain; its full sequence is Glycerol-3-phosphate dehydrogenase [NAD(P)+] (334 aa).

Trp13, Arg33, and Lys106 together coordinate NADPH. Residues Lys106, Gly137, and Ser139 each contribute to the sn-glycerol 3-phosphate site. An NADPH-binding site is contributed by Ala141. Residues Lys192, Asp245, Ser255, Arg256, and Asn257 each contribute to the sn-glycerol 3-phosphate site. Lys192 (proton acceptor) is an active-site residue. Arg256 contacts NADPH. The NADPH site is built by Val280 and Glu282.

It belongs to the NAD-dependent glycerol-3-phosphate dehydrogenase family.

The protein localises to the cytoplasm. The catalysed reaction is sn-glycerol 3-phosphate + NAD(+) = dihydroxyacetone phosphate + NADH + H(+). It carries out the reaction sn-glycerol 3-phosphate + NADP(+) = dihydroxyacetone phosphate + NADPH + H(+). It functions in the pathway membrane lipid metabolism; glycerophospholipid metabolism. Its function is as follows. Catalyzes the reduction of the glycolytic intermediate dihydroxyacetone phosphate (DHAP) to sn-glycerol 3-phosphate (G3P), the key precursor for phospholipid synthesis. The sequence is that of Glycerol-3-phosphate dehydrogenase [NAD(P)+] from Chlamydia trachomatis serovar L2b (strain UCH-1/proctitis).